Reading from the N-terminus, the 418-residue chain is Histidine--tRNA ligase (418 aa).

It belongs to the class-II aminoacyl-tRNA synthetase family. Homodimer.

It is found in the cytoplasm. The catalysed reaction is tRNA(His) + L-histidine + ATP = L-histidyl-tRNA(His) + AMP + diphosphate + H(+). The protein is Histidine--tRNA ligase of Dehalococcoides mccartyi (strain ATCC BAA-2266 / KCTC 15142 / 195) (Dehalococcoides ethenogenes (strain 195)).